The following is a 372-amino-acid chain: MGVDVSMTTSIEPAEDLSVLSGLTEITRFAGVGTAVSASSYSQSEVLDILDVEDPKIRSVFLNSAIDRRFLTLPPESPGGGRVSEPQGDLLDKHKELAVDMGCRALEACLKSAGATLSDLRHLCCVTSTGFLTPGLSALIIRELGIDPHCSRSDIVGMGCNAGLNALNVVAGWSAAHPGELGVVLCSEACSAAYALDGTMRTAVVNSLFGDGSAALAVISGDGRVPGPRVLKFASYIITDALDAMRYDWDRDQDRFSFFLDPQIPYVVGAHAEIVADRLLSGTGLRRSDIGHWLVHSGGKKVIDSVVVNLGLSRHDVRHTTGVLRDYGNLSSGSFLFSYERLAEEGVTRPGDYGVLMTMGPGSTIEMALIQW.

The active site involves C160.

It belongs to the thiolase-like superfamily. Chalcone/stilbene synthases family.

It carries out the reaction 4 malonyl-CoA + 4 H(+) = (3,5-dihydroxyphenyl)acetyl-CoA + 4 CO2 + 3 CoA + H2O. The protein operates within antibiotic biosynthesis. In terms of biological role, involved in the biosynthesis of the nonproteinogenic amino acid monomer (S)-3,5-dihydroxyphenylglycine (Dpg) responsible of the production of balhimycin antibiotic. Catalyzes the Claisen condensation of four molecules of malonyl-CoA to yield 3,5-dihydroxyphenylacetyl-CoA (DPA-CoA) and three free coenzyme A (CoA). DpgA requires the presence of the dehydratases DpgB and DpgD to facilitate the aromatization of the DPA-S-DgpA or DPA-S-CoA intermediate. The polypeptide is 3,5-dihydroxyphenylacetyl-CoA synthase (Amycolatopsis balhimycina).